The following is a 416-amino-acid chain: GTPase ERA1, chloroplastic (416 aa).

The N-terminal 53 residues, 1-53, are a transit peptide targeting the chloroplast; sequence MELGLALRLVAPPPLLPCLSRRALSLPPDFVSSRVLRGRRIHASRLKHGAGVV. Residues 117–287 enclose the Era-type G domain; that stretch reads RSGYVAVLGK…KEWILSKLPL (171 aa). The G1 stretch occupies residues 125 to 132; it reads GKPNVGKS. GTP is bound at residue 125 to 132; the sequence is GKPNVGKS. The interval 151–155 is G2; sequence QTTRH. The G3 stretch occupies residues 172–175; that stretch reads DTPG. Residues 172-176 and 237-240 each bind GTP; these read DTPGV and NKKD. Positions 237–240 are G4; that stretch reads NKKD. The interval 266-268 is G5; that stretch reads ISA. Residues 318–395 form the KH type-2 domain; the sequence is YRQEIPYSCQ…YLEVEVKVKE (78 aa).

This sequence belongs to the TRAFAC class TrmE-Era-EngA-EngB-Septin-like GTPase superfamily. Era GTPase family.

Its subcellular location is the plastid. The protein resides in the chloroplast stroma. The protein localises to the chloroplast nucleoid. Nuclear genome-encoded probable GTPase involved in ribosome biogenesis in chloroplasts. Plays a role in 16S rRNA maturation in plastids and may contribute to the assembly of the small (30S) ribosomal subunit. The protein is GTPase ERA1, chloroplastic of Zea mays (Maize).